Here is a 148-residue protein sequence, read N- to C-terminus: Large ribosomal subunit protein uL15 (148 aa).

The tract at residues 1 to 51 (MNLSSLKPAEGAVKSRKRIGRGPGSGLGGTSTRGHKGAKSRSGYSKKIGFE) is disordered. Residues 21–31 (RGPGSGLGGTS) show a composition bias toward gly residues.

The protein belongs to the universal ribosomal protein uL15 family. As to quaternary structure, part of the 50S ribosomal subunit.

Binds to the 23S rRNA. The sequence is that of Large ribosomal subunit protein uL15 from Porphyromonas gingivalis (strain ATCC 33277 / DSM 20709 / CIP 103683 / JCM 12257 / NCTC 11834 / 2561).